The sequence spans 127 residues: Calcitonin gene-related peptide 2 (127 aa).

The first 25 residues, 1–25 (MGFRKFSPFLALSILVLYQAGSLQA), serve as a signal peptide directing secretion. Residues 26–79 (APFRSALESSPDPATLSKEDARLLLAALVQDYVQMKASELKQEQETQGSSSAAQ) constitute a propeptide that is removed on maturation. Cysteines 83 and 88 form a disulfide. Position 118 is a phenylalanine amide (phenylalanine 118). Positions 124-127 (DLQA) are excised as a propeptide.

It belongs to the calcitonin family. Expressed in spinal cord, pituitary and thalamus.

The protein localises to the secreted. In terms of biological role, CALCB/CGRP2 is a peptide hormone that induces vasodilation mediated by the CALCRL-RAMP1 receptor complex. Dilates a variety of vessels including the coronary, cerebral and systemic vasculature. Its abundance in the CNS also points toward a neurotransmitter or neuromodulator role. This is Calcitonin gene-related peptide 2 from Homo sapiens (Human).